A 218-amino-acid chain; its full sequence is MSCSGSGADPEAAPASAASAPGPAPPVSAPAALPSSTAAENKASPAGTAGGPGAGAAAGGTGPLAARAGEPAERRGAAPVSAGGAAPPEGAISNGVYVLPSAANGDVKPVVSSTPLVDFLMQLEDYTPTIPDAVTGYYLNRAGFEASDPRIIRLISLAAQKFISDIANDALQHCKMKGTASGSSRSKSKDRKYTLTMEDLTPALSEYGINVKKPHYFT.

Low complexity-rich tracts occupy residues 1–21 (MSCSGSGADPEAAPASAASAP) and 29–39 (APAALPSSTAA). The disordered stretch occupies residues 1-85 (MSCSGSGADP…GAAPVSAGGA (85 aa)). Ser-2 carries the N-acetylserine modification. Ser-44 bears the Phosphoserine mark. The residue at position 48 (Thr-48) is a Phosphothreonine. The span at 48–62 (TAGGPGAGAAAGGTG) shows a compositional bias: gly residues. The short motif at 187-189 (KSK) is the [KR]-[STA]-K motif element. Residue Lys-189 is modified to Allysine; alternate. At Lys-189 the chain carries N6,N6,N6-trimethyllysine; alternate.

This sequence belongs to the TAF10 family. In terms of assembly, component of the TFIID basal transcription factor complex, composed of TATA-box-binding protein TBP, and a number of TBP-associated factors (TAFs), including TAF1, TAF2, TAF3, TAF4, TAF5, TAF6, TAF7, TAF8, TAF9, TAF10, TAF11, TAF12 and TAF13. Component of the TATA-binding protein-free TAF complex (TFTC), the PCAF histone acetylase complex and the STAGA transcription coactivator-HAT complex. The PCAF complex consists at least of TADA2L/ADA2, TADA3L/ADA3, SUPT3H, TAF5L TAF6L, TAF9, TAF10, TAF12 and TRRAP. The TFTC-HAT complex consists at least of TAF5L, TAF6L, TADA3L, SUPT3H, TAF2, TAF4, TAF5, GCN5L2/GCN5, TAF10 and TRRAP. The STAGA transcription coactivator-HAT complex consists at least of SUPT3H, GCN5L2, TAF5L, TAF6L, SUPT7L, TADA3L, TAD1L, TAF10, TAF12, TRRAP and TAF9. The STAGA core complex is associated with a subcomplex required for histone deubiquitination composed of ATXN7L3, ENY2 and USP22. Interacts with TAF3. Interacts with LOXL2. Interacts with TAF12 isoform TAFII20; the interaction is direct. In terms of processing, monomethylated at Lys-189 by SETD7, leading to increased affinity for RNA polymerase II. Post-translationally, lysine deamination at Lys-189 to form allysine is mediated by LOXL2. Allysine formation by LOXL2 results in release of TAF10 from promoters, leading to inhibition of TFIID-dependent transcription.

The protein resides in the nucleus. In terms of biological role, the TFIID basal transcription factor complex plays a major role in the initiation of RNA polymerase II (Pol II)-dependent transcription. TFIID recognizes and binds promoters with or without a TATA box via its subunit TBP, a TATA-box-binding protein, and promotes assembly of the pre-initiation complex (PIC). The TFIID complex consists of TBP and TBP-associated factors (TAFs), including TAF1, TAF2, TAF3, TAF4, TAF5, TAF6, TAF7, TAF8, TAF9, TAF10, TAF11, TAF12 and TAF13. TAF10 is also component of the PCAF histone acetylase complex, the TATA-binding protein-free TAF complex (TFTC) and the STAGA transcription coactivator-HAT complex. May regulate cyclin E expression. This is Transcription initiation factor TFIID subunit 10 (TAF10) from Homo sapiens (Human).